The chain runs to 192 residues: A-type ATP synthase subunit E (192 aa).

The protein belongs to the V-ATPase E subunit family. In terms of assembly, has multiple subunits with at least A(3), B(3), C, D, E, F, H, I and proteolipid K(x).

The protein resides in the cell membrane. In terms of biological role, component of the A-type ATP synthase that produces ATP from ADP in the presence of a proton gradient across the membrane. The chain is A-type ATP synthase subunit E from Methanocorpusculum labreanum (strain ATCC 43576 / DSM 4855 / Z).